Reading from the N-terminus, the 275-residue chain is Ribosomal RNA small subunit methyltransferase A (275 aa).

S-adenosyl-L-methionine is bound by residues Asn28, Leu30, Gly55, Glu77, Asp103, and Asn123.

Belongs to the class I-like SAM-binding methyltransferase superfamily. rRNA adenine N(6)-methyltransferase family. RsmA subfamily.

The protein resides in the cytoplasm. It carries out the reaction adenosine(1518)/adenosine(1519) in 16S rRNA + 4 S-adenosyl-L-methionine = N(6)-dimethyladenosine(1518)/N(6)-dimethyladenosine(1519) in 16S rRNA + 4 S-adenosyl-L-homocysteine + 4 H(+). Its function is as follows. Specifically dimethylates two adjacent adenosines (A1518 and A1519) in the loop of a conserved hairpin near the 3'-end of 16S rRNA in the 30S particle. May play a critical role in biogenesis of 30S subunits. In Rhizobium johnstonii (strain DSM 114642 / LMG 32736 / 3841) (Rhizobium leguminosarum bv. viciae), this protein is Ribosomal RNA small subunit methyltransferase A.